We begin with the raw amino-acid sequence, 440 residues long: tRNA(Ile)-lysidine synthase (440 aa).

Residue 31–36 coordinates ATP; it reads SGGADS.

This sequence belongs to the tRNA(Ile)-lysidine synthase family.

The protein localises to the cytoplasm. The catalysed reaction is cytidine(34) in tRNA(Ile2) + L-lysine + ATP = lysidine(34) in tRNA(Ile2) + AMP + diphosphate + H(+). Functionally, ligates lysine onto the cytidine present at position 34 of the AUA codon-specific tRNA(Ile) that contains the anticodon CAU, in an ATP-dependent manner. Cytidine is converted to lysidine, thus changing the amino acid specificity of the tRNA from methionine to isoleucine. This chain is tRNA(Ile)-lysidine synthase, found in Borreliella burgdorferi (strain ATCC 35210 / DSM 4680 / CIP 102532 / B31) (Borrelia burgdorferi).